A 359-amino-acid chain; its full sequence is Nicotinate N-methyltransferase 1 (359 aa).

Asp-226 is an S-adenosyl-L-methionine binding site.

This sequence belongs to the class I-like SAM-binding methyltransferase superfamily. Cation-independent O-methyltransferase family. As to expression, highly expressed in anthers, pistils, developing siliques, and developing seeds.

It is found in the cytoplasm. The protein localises to the cytosol. It carries out the reaction nicotinate + S-adenosyl-L-methionine = N-methylnicotinate + S-adenosyl-L-homocysteine. Functionally, involved in nicotinate detoxification in planta. Catalyzes the conversion of nicotinate to N-methylnicotinate, which is a detoxified form of endogenous nicotinate in planta. The sequence is that of Nicotinate N-methyltransferase 1 from Arabidopsis thaliana (Mouse-ear cress).